We begin with the raw amino-acid sequence, 344 residues long: Phosphate acyltransferase (344 aa).

This sequence belongs to the PlsX family. Homodimer. Probably interacts with PlsY.

The protein localises to the cytoplasm. It catalyses the reaction a fatty acyl-[ACP] + phosphate = an acyl phosphate + holo-[ACP]. The protein operates within lipid metabolism; phospholipid metabolism. Functionally, catalyzes the reversible formation of acyl-phosphate (acyl-PO(4)) from acyl-[acyl-carrier-protein] (acyl-ACP). This enzyme utilizes acyl-ACP as fatty acyl donor, but not acyl-CoA. This is Phosphate acyltransferase from Sphingopyxis alaskensis (strain DSM 13593 / LMG 18877 / RB2256) (Sphingomonas alaskensis).